The following is a 225-amino-acid chain: Peroxiredoxin-2E-2, chloroplastic (225 aa).

The N-terminal 42 residues, 1–42 (MAAPTAAALSTLSTASVTSGKRFITSSFSLSFSSRPLATGVR), are a transit peptide targeting the chloroplast. One can recognise a Thioredoxin domain in the interval 63-225 (IAVGDKLPDA…SSAEEMLKAL (163 aa)). Residue Cys111 is the Cysteine sulfenic acid (-SOH) intermediate of the active site.

The protein belongs to the peroxiredoxin family. Prx5 subfamily. As to quaternary structure, monomer.

The protein localises to the plastid. It is found in the chloroplast stroma. The enzyme catalyses [glutaredoxin]-dithiol + a hydroperoxide = [glutaredoxin]-disulfide + an alcohol + H2O. Thiol-specific peroxidase that catalyzes the reduction of hydrogen peroxide and organic hydroperoxides to water and alcohols, respectively. Plays a role in cell protection against oxidative stress by detoxifying peroxides. May be involved in chloroplast redox homeostasis. The chain is Peroxiredoxin-2E-2, chloroplastic (PRXIIE-2) from Oryza sativa subsp. japonica (Rice).